The following is a 113-amino-acid chain: Carrot ABA-induced in somatic embryos 3 (113 aa).

3 stretches are compositionally biased toward basic and acidic residues: residues 1–17 (MASG…RAKQ), 32–52 (EAQE…KEQL), and 65–77 (GETR…KEGY). Residues 1–113 (MASGQEKRSE…IDQSKFRTKS (113 aa)) form a disordered region.

The protein belongs to the small hydrophilic plant seed protein family. As to expression, expressed in embryogenic cells, somatic embryos and seeds at the later stages of development. Not detected in leaves.

In Daucus carota (Wild carrot), this protein is Carrot ABA-induced in somatic embryos 3.